Consider the following 124-residue polypeptide: Small ribosomal subunit protein bS16 (124 aa).

A compositionally biased stretch (basic and acidic residues) spans 84 to 110 (EKAERKNLKKGEPGKAAKERAEKRAAR). The segment at 84 to 124 (EKAERKNLKKGEPGKAAKERAEKRAAREAAANAPAEEAASE) is disordered. Positions 111–124 (EAAANAPAEEAASE) are enriched in low complexity.

This sequence belongs to the bacterial ribosomal protein bS16 family.

The polypeptide is Small ribosomal subunit protein bS16 (Paracoccus denitrificans (strain Pd 1222)).